A 415-amino-acid polypeptide reads, in one-letter code: 4-hydroxy-3-methylbut-2-en-1-yl diphosphate synthase (flavodoxin) (415 aa).

Cysteine 298, cysteine 301, cysteine 344, and glutamate 351 together coordinate [4Fe-4S] cluster.

It belongs to the IspG family. It depends on [4Fe-4S] cluster as a cofactor.

The enzyme catalyses (2E)-4-hydroxy-3-methylbut-2-enyl diphosphate + oxidized [flavodoxin] + H2O + 2 H(+) = 2-C-methyl-D-erythritol 2,4-cyclic diphosphate + reduced [flavodoxin]. It participates in isoprenoid biosynthesis; isopentenyl diphosphate biosynthesis via DXP pathway; isopentenyl diphosphate from 1-deoxy-D-xylulose 5-phosphate: step 5/6. Its function is as follows. Converts 2C-methyl-D-erythritol 2,4-cyclodiphosphate (ME-2,4cPP) into 1-hydroxy-2-methyl-2-(E)-butenyl 4-diphosphate. In Solibacter usitatus (strain Ellin6076), this protein is 4-hydroxy-3-methylbut-2-en-1-yl diphosphate synthase (flavodoxin).